The following is a 490-amino-acid chain: Thyroid hormone receptor alpha (490 aa).

Residues 1 to 32 (MEQKPSKVECGSDPEENSARSPDGKRKRKNGQ) form a disordered region. The segment at 1 to 52 (MEQKPSKVECGSDPEENSARSPDGKRKRKNGQCSLKTSMSGYIPSYLDKDEQ) is modulating. Zn(2+) is bound by residues C53, C56, C70, C73, C91, C97, C107, and C110. 2 consecutive NR C4-type zinc fingers follow at residues 53-73 (CVVC…CEGC) and 91-115 (CKYD…FKKC). Positions 53-127 (CVVCGDKATG…VGMAMDLVLD (75 aa)) form a DNA-binding region, nuclear receptor. One can recognise an NR LBD domain in the interval 163–407 (EEWDLIHIAT…EGQQLLGMHV (245 aa)). The 3,3',5-triiodo-L-thyronine site is built by R228 and S277. A disordered region spans residues 457–490 (AVCGEDDSSEADSPSSSEEEPEVCEDLAGNAASP).

It belongs to the nuclear hormone receptor family. NR1 subfamily. Binds DNA as a dimer; homodimer and heterodimer with RXRB. Interacts with NCOA3 and NCOA6 coactivators, leading to a strong increase of transcription of target genes. Probably interacts with SFPQ. Interacts with C1D. Interacts with AKAP13. Interacts with TP53INP2. Interacts with PER2. Isoform alpha-2 and isoform alpha-1 interact with TACC1, but the interaction with alpha-1 is weaker. The interaction with isoform alpha-1, but not alpha-2, is decreased in the presence of thyroid hormone T3.

The protein localises to the nucleus. It is found in the cytoplasm. Nuclear hormone receptor that can act as a repressor or activator of transcription. High affinity receptor for thyroid hormones, including triiodothyronine and thyroxine. In terms of biological role, does not bind thyroid hormone and functions as a weak dominant negative inhibitor of thyroid hormone action. This Homo sapiens (Human) protein is Thyroid hormone receptor alpha (THRA).